Consider the following 242-residue polypeptide: Segregation and condensation protein A (242 aa).

This sequence belongs to the ScpA family. In terms of assembly, component of a cohesin-like complex composed of ScpA, ScpB and the Smc homodimer, in which ScpA and ScpB bind to the head domain of Smc. The presence of the three proteins is required for the association of the complex with DNA.

It is found in the cytoplasm. Participates in chromosomal partition during cell division. May act via the formation of a condensin-like complex containing Smc and ScpB that pull DNA away from mid-cell into both cell halves. This chain is Segregation and condensation protein A, found in Streptococcus mitis.